We begin with the raw amino-acid sequence, 215 residues long: Probable transaldolase 1 (215 aa).

The active-site Schiff-base intermediate with substrate is Lys-83.

It belongs to the transaldolase family. Type 3B subfamily.

The protein localises to the cytoplasm. The catalysed reaction is D-sedoheptulose 7-phosphate + D-glyceraldehyde 3-phosphate = D-erythrose 4-phosphate + beta-D-fructose 6-phosphate. It participates in carbohydrate degradation; pentose phosphate pathway; D-glyceraldehyde 3-phosphate and beta-D-fructose 6-phosphate from D-ribose 5-phosphate and D-xylulose 5-phosphate (non-oxidative stage): step 2/3. Its function is as follows. Transaldolase is important for the balance of metabolites in the pentose-phosphate pathway. In Bacillus cereus (strain ATCC 14579 / DSM 31 / CCUG 7414 / JCM 2152 / NBRC 15305 / NCIMB 9373 / NCTC 2599 / NRRL B-3711), this protein is Probable transaldolase 1.